The chain runs to 396 residues: L-lactate dehydrogenase (396 aa).

Positions 1 to 380 (MIISAASDYR…SGDSLVQELG (380 aa)) constitute an FMN hydroxy acid dehydrogenase domain. Residue tyrosine 24 coordinates substrate. Positions 106 and 127 each coordinate FMN. Tyrosine 129 serves as a coordination point for substrate. Threonine 155 is a binding site for FMN. Arginine 164 contributes to the substrate binding site. Lysine 251 is a binding site for FMN. Residue histidine 275 is the Proton acceptor of the active site. Arginine 278 is a substrate binding site. 306–330 (DSGIRNGLDVVRMIALGADTVLLGR) provides a ligand contact to FMN.

The protein belongs to the FMN-dependent alpha-hydroxy acid dehydrogenase family. FMN serves as cofactor.

It localises to the cell inner membrane. The catalysed reaction is (S)-lactate + A = pyruvate + AH2. In terms of biological role, catalyzes the conversion of L-lactate to pyruvate. Is coupled to the respiratory chain. This is L-lactate dehydrogenase from Salmonella newport (strain SL254).